Reading from the N-terminus, the 114-residue chain is MGPGLLCWALLCLLGAGLVDAGVTQSPTHLIKTRGQQVTLRCSPKSGHDTVSWYQQALGQGPQFIFQYYEEEERQRGNFPDRFSGHQFPNYSSELNVNALLLGDSALYLCASSL.

The first 21 residues, 1–21, serve as a signal peptide directing secretion; that stretch reads MGPGLLCWALLCLLGAGLVDA. Positions 22–114 constitute an Ig-like domain; that stretch reads GVTQSPTHLI…SALYLCASSL (93 aa). A disulfide bond links C42 and C110. N-linked (GlcNAc...) asparagine glycosylation is present at N90.

Alpha-beta TR is a heterodimer composed of an alpha and beta chain; disulfide-linked. The alpha-beta TR is associated with the transmembrane signaling CD3 coreceptor proteins to form the TR-CD3 (TcR or TCR). The assembly of alpha-beta TR heterodimers with CD3 occurs in the endoplasmic reticulum where a single alpha-beta TR heterodimer associates with one CD3D-CD3E heterodimer, one CD3G-CD3E heterodimer and one CD247 homodimer forming a stable octameric structure. CD3D-CD3E and CD3G-CD3E heterodimers preferentially associate with TR alpha and TR beta chains, respectively. The association of the CD247 homodimer is the last step of TcR assembly in the endoplasmic reticulum and is required for transport to the cell surface.

The protein localises to the cell membrane. Its function is as follows. V region of the variable domain of T cell receptor (TR) beta chain that participates in the antigen recognition. Alpha-beta T cell receptors are antigen specific receptors which are essential to the immune response and are present on the cell surface of T lymphocytes. Recognize peptide-major histocompatibility (MH) (pMH) complexes that are displayed by antigen presenting cells (APC), a prerequisite for efficient T cell adaptive immunity against pathogens. Binding of alpha-beta TR to pMH complex initiates TR-CD3 clustering on the cell surface and intracellular activation of LCK that phosphorylates the ITAM motifs of CD3G, CD3D, CD3E and CD247 enabling the recruitment of ZAP70. In turn ZAP70 phosphorylates LAT, which recruits numerous signaling molecules to form the LAT signalosome. The LAT signalosome propagates signal branching to three major signaling pathways, the calcium, the mitogen-activated protein kinase (MAPK) kinase and the nuclear factor NF-kappa-B (NF-kB) pathways, leading to the mobilization of transcription factors that are critical for gene expression and essential for T cell growth and differentiation. The T cell repertoire is generated in the thymus, by V-(D)-J rearrangement. This repertoire is then shaped by intrathymic selection events to generate a peripheral T cell pool of self-MH restricted, non-autoaggressive T cells. Post-thymic interaction of alpha-beta TR with the pMH complexes shapes TR structural and functional avidity. The sequence is that of T cell receptor beta variable 5-6 from Homo sapiens (Human).